The primary structure comprises 185 residues: Phospholipase A2 inhibitor 25 kDa subunit (185 aa).

8 cysteine pairs are disulfide-bonded: cysteine 3-cysteine 27, cysteine 6-cysteine 13, cysteine 20-cysteine 48, cysteine 54-cysteine 75, cysteine 76-cysteine 81, cysteine 101-cysteine 126, cysteine 119-cysteine 146, and cysteine 152-cysteine 172.

Belongs to the CNF-like-inhibitor family. In terms of assembly, heterodimer with phospholipase A2 inhibitor 31 kDa. In terms of tissue distribution, expressed by the liver.

The protein localises to the secreted. In terms of biological role, inhibits the enzymatic activity of phospholipase A2. This Naja kaouthia (Monocled cobra) protein is Phospholipase A2 inhibitor 25 kDa subunit.